The chain runs to 124 residues: Fluoride-specific ion channel FluC (124 aa).

4 helical membrane-spanning segments follow: residues 1 to 21 (MIALIAAVSAGGIAGTLLRFA), 37 to 57 (GTLAVNLVGCLLIGLLYGLFL), 69 to 89 (GLIVGFLGGLTTFSSFSLDTV), and 99 to 119 (LALGYTSISVVGGLLATWAGL). Residues Gly-76 and Thr-79 each coordinate Na(+).

The protein belongs to the fluoride channel Fluc/FEX (TC 1.A.43) family.

It is found in the cell inner membrane. The catalysed reaction is fluoride(in) = fluoride(out). Its activity is regulated as follows. Na(+) is not transported, but it plays an essential structural role and its presence is essential for fluoride channel function. Fluoride-specific ion channel. Important for reducing fluoride concentration in the cell, thus reducing its toxicity. The polypeptide is Fluoride-specific ion channel FluC (Pseudomonas putida (strain ATCC 700007 / DSM 6899 / JCM 31910 / BCRC 17059 / LMG 24140 / F1)).